Reading from the N-terminus, the 78-residue chain is MDVENTVVEILADLTGNDDIKDDMDMDLFETGTLDSMATVQLLLELQGQLDIDVPVSEFDRNEWATPNKIIAKAKELQ.

The region spanning 1-78 (MDVENTVVEI…KIIAKAKELQ (78 aa)) is the Carrier domain. Serine 36 is subject to O-(pantetheine 4'-phosphoryl)serine.

The protein belongs to the DltC family. Post-translationally, 4'-phosphopantetheine is transferred from CoA to a specific serine of apo-DCP.

The protein resides in the cytoplasm. Its pathway is cell wall biogenesis; lipoteichoic acid biosynthesis. Functionally, carrier protein involved in the D-alanylation of lipoteichoic acid (LTA). The loading of thioester-linked D-alanine onto DltC is catalyzed by D-alanine--D-alanyl carrier protein ligase DltA. The DltC-carried D-alanyl group is further transferred to cell membrane phosphatidylglycerol (PG) by forming an ester bond, probably catalyzed by DltD. D-alanylation of LTA plays an important role in modulating the properties of the cell wall in Gram-positive bacteria, influencing the net charge of the cell wall. The protein is D-alanyl carrier protein of Latilactobacillus sakei subsp. sakei (strain 23K) (Lactobacillus sakei subsp. sakei).